Reading from the N-terminus, the 211-residue chain is MLTIALSKGRILDDTLPLLAEAGIVPTENPDKSRKLIIPTTQDDVRLLIVRATDVPTYVEHGAADLGVAGKDVLMEYGGQGLYEPLDLQIAQCKLMTAGVTGAPEPKGRLRVATKFVNVAKRYYAEQGRQVDIIKLYGSMELAPLINLADKIIDVVDTGNTLRANGLEPQELIATISSRLVVNKASMKMQHARIQSLIDTLRNAVESRHRG.

This sequence belongs to the ATP phosphoribosyltransferase family. Short subfamily. Heteromultimer composed of HisG and HisZ subunits.

The protein resides in the cytoplasm. It carries out the reaction 1-(5-phospho-beta-D-ribosyl)-ATP + diphosphate = 5-phospho-alpha-D-ribose 1-diphosphate + ATP. It participates in amino-acid biosynthesis; L-histidine biosynthesis; L-histidine from 5-phospho-alpha-D-ribose 1-diphosphate: step 1/9. Functionally, catalyzes the condensation of ATP and 5-phosphoribose 1-diphosphate to form N'-(5'-phosphoribosyl)-ATP (PR-ATP). Has a crucial role in the pathway because the rate of histidine biosynthesis seems to be controlled primarily by regulation of HisG enzymatic activity. In Pseudomonas entomophila (strain L48), this protein is ATP phosphoribosyltransferase.